We begin with the raw amino-acid sequence, 125 residues long: Protein sigma-1-small (125 aa).

This sequence belongs to the orthoreovirus sigma-1s protein family.

The protein is Protein sigma-1-small (S1) of Mammalia (T2J).